The primary structure comprises 35 residues: Bacteriocin lactococcin-G subunit beta (35 aa).

As to quaternary structure, bacteriocin activity requires interaction of alpha and beta peptides in a molar ratio of 7:1 or 8:1 respectively.

Functionally, kills Lactococci. The polypeptide is Bacteriocin lactococcin-G subunit beta (Lactococcus lactis subsp. lactis (Streptococcus lactis)).